Reading from the N-terminus, the 110-residue chain is Acylphosphatase (110 aa).

The 88-residue stretch at 21–108 (TRRYLVTGRV…TNLKSFRIEG (88 aa)) folds into the Acylphosphatase-like domain. Catalysis depends on residues arginine 36 and asparagine 54.

It belongs to the acylphosphatase family.

It catalyses the reaction an acyl phosphate + H2O = a carboxylate + phosphate + H(+). The polypeptide is Acylphosphatase (acyP) (Koribacter versatilis (strain Ellin345)).